A 131-amino-acid polypeptide reads, in one-letter code: Translation initiation factor 5A (131 aa).

Lys-37 is subject to Hypusine.

Belongs to the eIF-5A family.

The protein localises to the cytoplasm. Functions by promoting the formation of the first peptide bond. The polypeptide is Translation initiation factor 5A (eIF5A) (Methanococcus maripaludis (strain C5 / ATCC BAA-1333)).